The chain runs to 326 residues: Intracellular serine protease (326 aa).

One can recognise a Peptidase S8 domain in the interval 23-303 (PRGVEMIQAP…NGLLYLTAVE (281 aa)). Catalysis depends on charge relay system residues Asp-49, His-86, and Ser-244.

This sequence belongs to the peptidase S8 family.

Involved in the generation of beta- and alpha-amylases from the large amylase precursor. The chain is Intracellular serine protease (isp) from Paenibacillus polymyxa (Bacillus polymyxa).